Reading from the N-terminus, the 528-residue chain is Tyrosine--tRNA ligase, cytoplasmic (528 aa).

The residue at position 1 (M1) is an N-acetylmethionine. G2 carries the N-acetylglycine; in Tyrosine--tRNA ligase, cytoplasmic, N-terminally processed modification. An L-tyrosine-binding site is contributed by Y39. Y39 lines the trans-resveratrol pocket. The 'HIGH' region signature appears at 44–52 (TTGKPHVAY). L-tyrosine contacts are provided by Y166, Q170, D173, and Q188. Residues Q170 and D173 each coordinate trans-resveratrol. K197 carries the post-translational modification N6-acetyllysine. Phosphoserine is present on S205. K206 is modified (N6-acetyllysine). Residues 222-226 (KMSSS) carry the 'KMSKS' region motif. A Nuclear localization signal motif is present at residues 242–247 (KKKLKK). The interval 339-363 (AAYPDPSKQKPTAKGPAKSSEPEEI) is disordered. The region spanning 364-468 (IPSRLDIRVG…AGSAPGERVF (105 aa)) is the tRNA-binding domain. S386 is modified (phosphoserine). K474, K482, and K490 each carry N6-acetyllysine.

The protein belongs to the class-I aminoacyl-tRNA synthetase family. As to quaternary structure, homodimer. Interacts (when binding to resveratrol) with PARP1; interaction stimulates the poly-ADP-ribosyltransferase activity of PARP1.

The protein localises to the cytoplasm. It localises to the nucleus. The enzyme catalyses tRNA(Tyr) + L-tyrosine + ATP = L-tyrosyl-tRNA(Tyr) + AMP + diphosphate + H(+). Resveratrol strongly inhibits the tyrosine--tRNA ligase activity. In terms of biological role, tyrosine--tRNA ligase that catalyzes the attachment of tyrosine to tRNA(Tyr) in a two-step reaction: tyrosine is first activated by ATP to form Tyr-AMP and then transferred to the acceptor end of tRNA(Tyr). Also acts as a positive regulator of poly-ADP-ribosylation in the nucleus, independently of its tyrosine--tRNA ligase activity. Activity is switched upon resveratrol-binding: resveratrol strongly inhibits the tyrosine--tRNA ligase activity and promotes relocalization to the nucleus, where YARS1 specifically stimulates the poly-ADP-ribosyltransferase activity of PARP1. The protein is Tyrosine--tRNA ligase, cytoplasmic (Yars1) of Rattus norvegicus (Rat).